The primary structure comprises 359 residues: GTP cyclohydrolase FolE2 (359 aa).

The protein belongs to the GTP cyclohydrolase IV family.

It carries out the reaction GTP + H2O = 7,8-dihydroneopterin 3'-triphosphate + formate + H(+). The protein operates within cofactor biosynthesis; 7,8-dihydroneopterin triphosphate biosynthesis; 7,8-dihydroneopterin triphosphate from GTP: step 1/1. Functionally, converts GTP to 7,8-dihydroneopterin triphosphate. The polypeptide is GTP cyclohydrolase FolE2 (Cereibacter sphaeroides (strain ATCC 17029 / ATH 2.4.9) (Rhodobacter sphaeroides)).